The sequence spans 230 residues: Uracil-DNA glycosylase (230 aa).

The active-site Proton acceptor is the Asp-70.

This sequence belongs to the uracil-DNA glycosylase (UDG) superfamily. UNG family.

The protein localises to the cytoplasm. The enzyme catalyses Hydrolyzes single-stranded DNA or mismatched double-stranded DNA and polynucleotides, releasing free uracil.. In terms of biological role, excises uracil residues from the DNA which can arise as a result of misincorporation of dUMP residues by DNA polymerase or due to deamination of cytosine. The polypeptide is Uracil-DNA glycosylase (Pseudomonas entomophila (strain L48)).